The primary structure comprises 74 residues: Conotoxin Cal27 (74 aa).

The signal sequence occupies residues 1–19 (MSGTGVLLLTLLLLVAMAA).

Post-translationally, may contain 4 disulfide bonds. In terms of tissue distribution, expressed by the venom duct.

The protein resides in the secreted. Functionally, probable neurotoxin. In Californiconus californicus (California cone), this protein is Conotoxin Cal27.